A 314-amino-acid polypeptide reads, in one-letter code: Probable 2-(5''-triphosphoribosyl)-3'-dephosphocoenzyme-A synthase (314 aa).

Belongs to the CitG/MdcB family.

The enzyme catalyses 3'-dephospho-CoA + ATP = 2'-(5''-triphospho-alpha-D-ribosyl)-3'-dephospho-CoA + adenine. The sequence is that of Probable 2-(5''-triphosphoribosyl)-3'-dephosphocoenzyme-A synthase from Photobacterium profundum (strain SS9).